The sequence spans 205 residues: Small ribosomal subunit protein uS4 (205 aa).

The tract at residues 19–45 is disordered; it reads IWGRPKSPVNRREYGPGQHGQRRKGKL. Positions 94–157 constitute an S4 RNA-binding domain; that stretch reads SRLDAVVYRA…KQLAIVLEAV (64 aa).

It belongs to the universal ribosomal protein uS4 family. As to quaternary structure, part of the 30S ribosomal subunit. Contacts protein S5. The interaction surface between S4 and S5 is involved in control of translational fidelity.

Functionally, one of the primary rRNA binding proteins, it binds directly to 16S rRNA where it nucleates assembly of the body of the 30S subunit. In terms of biological role, with S5 and S12 plays an important role in translational accuracy. This Brucella melitensis biotype 2 (strain ATCC 23457) protein is Small ribosomal subunit protein uS4.